A 369-amino-acid polypeptide reads, in one-letter code: Protein FAM187B (369 aa).

Residues 1–17 form the signal peptide; the sequence is MPPMLWLLLHFAAPALG. Over 18–335 the chain is Extracellular; sequence FYFSISCPSG…RADSVLKGLK (318 aa). Asparagine 45, asparagine 68, and asparagine 130 each carry an N-linked (GlcNAc...) asparagine glycan. The chain crosses the membrane as a helical span at residues 336 to 356; sequence LVLLVVTVLALLGALLKCIHP. The Cytoplasmic segment spans residues 357-369; the sequence is SPGRRSTQVLVVK.

Belongs to the FAM187 family.

Its subcellular location is the membrane. The chain is Protein FAM187B (FAM187B) from Homo sapiens (Human).